The sequence spans 204 residues: dTTP/UTP pyrophosphatase (204 aa).

Residue aspartate 76 is the Proton acceptor of the active site.

It belongs to the Maf family. YhdE subfamily. Requires a divalent metal cation as cofactor.

It is found in the cytoplasm. It catalyses the reaction dTTP + H2O = dTMP + diphosphate + H(+). The enzyme catalyses UTP + H2O = UMP + diphosphate + H(+). Functionally, nucleoside triphosphate pyrophosphatase that hydrolyzes dTTP and UTP. May have a dual role in cell division arrest and in preventing the incorporation of modified nucleotides into cellular nucleic acids. In Salinibacter ruber (strain DSM 13855 / M31), this protein is dTTP/UTP pyrophosphatase.